A 163-amino-acid polypeptide reads, in one-letter code: NADH-quinone oxidoreductase subunit I (163 aa).

2 consecutive 4Fe-4S ferredoxin-type domains span residues 54–84 and 94–123; these read LRRY…IDSA and TRYD…ETHI. [4Fe-4S] cluster-binding residues include Cys-64, Cys-67, Cys-70, Cys-74, Cys-103, Cys-106, Cys-109, and Cys-113.

Belongs to the complex I 23 kDa subunit family. NDH-1 is composed of 14 different subunits. Subunits NuoA, H, J, K, L, M, N constitute the membrane sector of the complex. It depends on [4Fe-4S] cluster as a cofactor.

The protein resides in the cell inner membrane. The catalysed reaction is a quinone + NADH + 5 H(+)(in) = a quinol + NAD(+) + 4 H(+)(out). NDH-1 shuttles electrons from NADH, via FMN and iron-sulfur (Fe-S) centers, to quinones in the respiratory chain. The immediate electron acceptor for the enzyme in this species is believed to be ubiquinone. Couples the redox reaction to proton translocation (for every two electrons transferred, four hydrogen ions are translocated across the cytoplasmic membrane), and thus conserves the redox energy in a proton gradient. The chain is NADH-quinone oxidoreductase subunit I from Xanthomonas campestris pv. campestris (strain 8004).